We begin with the raw amino-acid sequence, 165 residues long: Nucleotide-binding protein Syncc9605_0652 (165 aa).

It belongs to the YajQ family.

Functionally, nucleotide-binding protein. The chain is Nucleotide-binding protein Syncc9605_0652 from Synechococcus sp. (strain CC9605).